The primary structure comprises 418 residues: Serine/threonine transporter SstT (418 aa).

9 consecutive transmembrane segments (helical) span residues 16-36 (SLVS…TLIP), 45-65 (LGTL…LLLV), 83-103 (LLIL…VASF), 142-162 (ALLE…GLSL), 192-212 (PLGI…SALL), 218-238 (LIVL…LIVF), 289-309 (VSIP…ITVL), 317-337 (LGIS…TISA), and 364-384 (VAMQ…SAET).

It belongs to the dicarboxylate/amino acid:cation symporter (DAACS) (TC 2.A.23) family.

Its subcellular location is the cell inner membrane. It carries out the reaction L-serine(in) + Na(+)(in) = L-serine(out) + Na(+)(out). The catalysed reaction is L-threonine(in) + Na(+)(in) = L-threonine(out) + Na(+)(out). Functionally, involved in the import of serine and threonine into the cell, with the concomitant import of sodium (symport system). This Tolumonas auensis (strain DSM 9187 / NBRC 110442 / TA 4) protein is Serine/threonine transporter SstT.